The chain runs to 89 residues: Acylphosphatase (89 aa).

Residues arginine 3–arginine 89 form the Acylphosphatase-like domain. Catalysis depends on residues arginine 18 and asparagine 36.

The protein belongs to the acylphosphatase family.

The enzyme catalyses an acyl phosphate + H2O = a carboxylate + phosphate + H(+). The sequence is that of Acylphosphatase (acyP) from Rhodococcus jostii (strain RHA1).